The chain runs to 289 residues: ATP synthase gamma chain (289 aa).

It belongs to the ATPase gamma chain family. In terms of assembly, F-type ATPases have 2 components, CF(1) - the catalytic core - and CF(0) - the membrane proton channel. CF(1) has five subunits: alpha(3), beta(3), gamma(1), delta(1), epsilon(1). CF(0) has three main subunits: a, b and c.

It is found in the cell inner membrane. Produces ATP from ADP in the presence of a proton gradient across the membrane. The gamma chain is believed to be important in regulating ATPase activity and the flow of protons through the CF(0) complex. This chain is ATP synthase gamma chain, found in Coxiella burnetii (strain CbuK_Q154) (Coxiella burnetii (strain Q154)).